The sequence spans 294 residues: Nucleoside-specific channel-forming protein Tsx (294 aa).

Positions 1-22 (MKKTLLAASAVVALSASFTAGA) are cleaved as a signal peptide.

This sequence belongs to the nucleoside-specific channel-forming outer membrane porin (Tsx) (TC 1.B.10) family.

The protein resides in the cell outer membrane. Its function is as follows. Functions as a substrate-specific channel for nucleosides and deoxynucleosides. Also functions in albicidin uptake and as receptor for colicin K. Also is a receptor for several Tsx-specific bacteriophages. The chain is Nucleoside-specific channel-forming protein Tsx from Klebsiella aerogenes (strain ATCC 13048 / DSM 30053 / CCUG 1429 / JCM 1235 / KCTC 2190 / NBRC 13534 / NCIMB 10102 / NCTC 10006 / CDC 819-56) (Enterobacter aerogenes).